The primary structure comprises 494 residues: UDP-N-acetylmuramoyl-L-alanyl-D-glutamate--L-lysine ligase (494 aa).

A UDP-N-acetyl-alpha-D-muramoyl-L-alanyl-D-glutamate-binding site is contributed by Ser30. 110 to 116 contributes to the ATP binding site; the sequence is GTNGKTS. Residues 152–153, Ser179, and Arg187 contribute to the UDP-N-acetyl-alpha-D-muramoyl-L-alanyl-D-glutamate site; that span reads TT. N6-carboxylysine is present on Lys219. Residues 406–409 carry the L-lysine recognition motif motif; that stretch reads DNPA.

Belongs to the MurCDEF family. MurE subfamily. In terms of processing, carboxylation is probably crucial for Mg(2+) binding and, consequently, for the gamma-phosphate positioning of ATP.

It is found in the cytoplasm. The enzyme catalyses UDP-N-acetyl-alpha-D-muramoyl-L-alanyl-D-glutamate + L-lysine + ATP = UDP-N-acetyl-alpha-D-muramoyl-L-alanyl-gamma-D-glutamyl-L-lysine + ADP + phosphate + H(+). The protein operates within cell wall biogenesis; peptidoglycan biosynthesis. Its function is as follows. Catalyzes the addition of L-lysine to the nucleotide precursor UDP-N-acetylmuramoyl-L-alanyl-D-glutamate (UMAG) in the biosynthesis of bacterial cell-wall peptidoglycan. In Staphylococcus epidermidis (strain ATCC 35984 / DSM 28319 / BCRC 17069 / CCUG 31568 / BM 3577 / RP62A), this protein is UDP-N-acetylmuramoyl-L-alanyl-D-glutamate--L-lysine ligase.